Consider the following 127-residue polypeptide: Fumarate reductase subunit C (127 aa).

3 consecutive transmembrane segments (helical) span residues 30–50 (ATVL…GSLV), 67–87 (IVVA…QTFF), and 107–127 (IIVL…LIVM).

The protein belongs to the FrdC family. As to quaternary structure, part of an enzyme complex containing four subunits: a flavoprotein (FrdA), an iron-sulfur protein (FrdB), and two hydrophobic anchor proteins (FrdC and FrdD).

It is found in the cell inner membrane. In terms of biological role, anchors the catalytic components of the fumarate reductase complex to the cell membrane, binds quinones. The sequence is that of Fumarate reductase subunit C from Vibrio campbellii (strain ATCC BAA-1116).